A 393-amino-acid polypeptide reads, in one-letter code: Short-chain dehydrogenase/reductase family 42E member 1 (393 aa).

The active-site Proton acceptor is the tyrosine 152. Lysine 156 serves as a coordination point for NAD(+). 2 helical membrane passes run 282–302 (LPLT…FILG) and 371–391 (GLVI…SVIL).

It belongs to the 3-beta-HSD family.

The protein resides in the membrane. The chain is Short-chain dehydrogenase/reductase family 42E member 1 (SDR42E1) from Bos taurus (Bovine).